The following is a 322-amino-acid chain: Ribosomal lysine N-methyltransferase 5 (322 aa).

Residues tryptophan 92, 141–143 (GTG), aspartate 163, tryptophan 214, and methionine 242 each bind S-adenosyl-L-methionine.

This sequence belongs to the class I-like SAM-binding methyltransferase superfamily. RKM5 family.

In terms of biological role, S-adenosyl-L-methionine-dependent protein-lysine N-methyltransferase that methylates 60S ribosomal protein L1. In Kluyveromyces lactis (strain ATCC 8585 / CBS 2359 / DSM 70799 / NBRC 1267 / NRRL Y-1140 / WM37) (Yeast), this protein is Ribosomal lysine N-methyltransferase 5 (RKM5).